The following is a 249-amino-acid chain: Methyl-coenzyme M reductase I subunit gamma (249 aa).

Arg-120 contacts coenzyme M.

Belongs to the methyl-coenzyme M reductase gamma subunit family. In terms of assembly, MCR is a hexamer of two alpha, two beta, and two gamma chains, forming a dimer of heterotrimers. It depends on coenzyme F430 as a cofactor.

The protein localises to the cytoplasm. It carries out the reaction coenzyme B + methyl-coenzyme M = methane + coenzyme M-coenzyme B heterodisulfide. Its pathway is one-carbon metabolism; methyl-coenzyme M reduction; methane from methyl-coenzyme M: step 1/1. Methyl-coenzyme M reductase activity is inhibited by 3-nitrooxypropanol (3-NOP) in vitro and in vivo, by oxidation of its active site Ni(I), which stops both growth and methanogenesis. Is also inhibited by the reaction product CoM-S-S-CoB. Functionally, component of the methyl-coenzyme M reductase (MCR) I that catalyzes the reductive cleavage of methyl-coenzyme M (CoM-S-CH3 or 2-(methylthio)ethanesulfonate) using coenzyme B (CoB or 7-mercaptoheptanoylthreonine phosphate) as reductant which results in the production of methane and the mixed heterodisulfide of CoB and CoM (CoM-S-S-CoB). This is the final step in methanogenesis. Neither N-6-mercaptohexanoylthreonine phosphate (H-S-HxoTP) nor N-8-mercaptooctanoylthreonine phosphate (H-SOcoTP) nor any other thiol compound such as CoA or CoM can substitute for CoB as the electron donor. This chain is Methyl-coenzyme M reductase I subunit gamma (mcrG), found in Methanothermobacter marburgensis (strain ATCC BAA-927 / DSM 2133 / JCM 14651 / NBRC 100331 / OCM 82 / Marburg) (Methanobacterium thermoautotrophicum).